Consider the following 307-residue polypeptide: Adenosylcobinamide-GDP ribazoletransferase (307 aa).

The next 8 membrane-spanning stretches (helical) occupy residues 22-42 (PLFE…VPGA), 58-78 (PFVG…IGPI), 80-100 (GVIH…WELL), 137-157 (FGLA…ASLV), 161-181 (VWWM…VTAL), 212-232 (TAAL…LTSV), 248-268 (AWLG…AALF), and 283-303 (CIGA…AVVA).

The protein belongs to the CobS family. Mg(2+) is required as a cofactor.

It is found in the cell membrane. The enzyme catalyses alpha-ribazole + adenosylcob(III)inamide-GDP = adenosylcob(III)alamin + GMP + H(+). It catalyses the reaction alpha-ribazole 5'-phosphate + adenosylcob(III)inamide-GDP = adenosylcob(III)alamin 5'-phosphate + GMP + H(+). The protein operates within cofactor biosynthesis; adenosylcobalamin biosynthesis; adenosylcobalamin from cob(II)yrinate a,c-diamide: step 7/7. Its function is as follows. Joins adenosylcobinamide-GDP and alpha-ribazole to generate adenosylcobalamin (Ado-cobalamin). Also synthesizes adenosylcobalamin 5'-phosphate from adenosylcobinamide-GDP and alpha-ribazole 5'-phosphate. The protein is Adenosylcobinamide-GDP ribazoletransferase of Corynebacterium glutamicum (strain ATCC 13032 / DSM 20300 / JCM 1318 / BCRC 11384 / CCUG 27702 / LMG 3730 / NBRC 12168 / NCIMB 10025 / NRRL B-2784 / 534).